A 341-amino-acid chain; its full sequence is UPF0284 protein Ta0078 (341 aa).

It belongs to the UPF0284 family.

The protein is UPF0284 protein Ta0078 of Thermoplasma acidophilum (strain ATCC 25905 / DSM 1728 / JCM 9062 / NBRC 15155 / AMRC-C165).